Consider the following 193-residue polypeptide: MASTDKPGGDPEYRTSSTPAPAGVDYFKFDVILRFLLFAASLVAVVVIVTANQTEVIRVPQPVPWPAKFRYSPAFVYFVAALSVTGLYSIITTLASLLASNKPALKTKLLLYFILWDALILGIIASATGTAGGVAYLGLKGNRHVVGWNKICHVYDKFCRHVGASIAVALFGSVVTVLLIWLSAYSIHSRVPK.

Residues 1 to 30 (MASTDKPGGDPEYRTSSTPAPAGVDYFKFD) lie on the Cytoplasmic side of the membrane. Residues 31-51 (VILRFLLFAASLVAVVVIVTA) traverse the membrane as a helical segment. An N-linked (GlcNAc...) asparagine glycan is attached at asparagine 52. Residues 52 to 73 (NQTEVIRVPQPVPWPAKFRYSP) lie on the Extracellular side of the membrane. A helical transmembrane segment spans residues 74 to 94 (AFVYFVAALSVTGLYSIITTL). The Cytoplasmic portion of the chain corresponds to 95–108 (ASLLASNKPALKTK). The helical transmembrane segment at 109 to 129 (LLLYFILWDALILGIIASATG) threads the bilayer. Topologically, residues 130–161 (TAGGVAYLGLKGNRHVVGWNKICHVYDKFCRH) are extracellular. The chain crosses the membrane as a helical span at residues 162–182 (VGASIAVALFGSVVTVLLIWL). Residues 183–193 (SAYSIHSRVPK) are Cytoplasmic-facing.

Belongs to the Casparian strip membrane proteins (CASP) family. In terms of assembly, homodimer and heterodimers.

Its subcellular location is the cell membrane. The protein is CASP-like protein 1D2 of Glycine max (Soybean).